The following is a 180-amino-acid chain: MAARLRERYEKEIRSELMKELGFANPMQAPKLEKIVVNMGLGEAINNGKIIDASVEQLSAITGQKPVVTKARKSIANFKLRQGQSIGAMVTLRGDRMYEFFDRLVSIALPRVRDFKGVSPKAFDGKGNYTLGVREQIIFPEINYDKVEKIKGMNITVVTTARNDEEGRALLRHLGMPFRQ.

This sequence belongs to the universal ribosomal protein uL5 family. As to quaternary structure, part of the 50S ribosomal subunit; part of the 5S rRNA/L5/L18/L25 subcomplex. Contacts the 5S rRNA and the P site tRNA. Forms a bridge to the 30S subunit in the 70S ribosome.

Functionally, this is one of the proteins that bind and probably mediate the attachment of the 5S RNA into the large ribosomal subunit, where it forms part of the central protuberance. In the 70S ribosome it contacts protein S13 of the 30S subunit (bridge B1b), connecting the 2 subunits; this bridge is implicated in subunit movement. Contacts the P site tRNA; the 5S rRNA and some of its associated proteins might help stabilize positioning of ribosome-bound tRNAs. The chain is Large ribosomal subunit protein uL5 from Anaeromyxobacter sp. (strain Fw109-5).